The sequence spans 631 residues: 2-isopropylmalate synthase 2, chloroplastic (631 aa).

A chloroplast-targeting transit peptide spans 1-46 (MESSILKSPNLSSPSFGVPSIPALSSSSTSPFSSLHLRSQNHRTIS). In terms of domain architecture, Pyruvate carboxyltransferase spans 87–360 (VRIFDTTLRD…FTGIDTRHIV (274 aa)). Residues Asp96, His293, and Asn329 each contribute to the a divalent metal cation site.

The protein belongs to the alpha-IPM synthase/homocitrate synthase family. LeuA type 1 subfamily. As to quaternary structure, homotetramer. It depends on Mg(2+) as a cofactor. Mn(2+) is required as a cofactor. Expressed in roots, stems, leaves, flowers and siliques.

Its subcellular location is the plastid. It is found in the chloroplast. The enzyme catalyses 3-methyl-2-oxobutanoate + acetyl-CoA + H2O = (2S)-2-isopropylmalate + CoA + H(+). It participates in amino-acid biosynthesis; L-leucine biosynthesis; L-leucine from 3-methyl-2-oxobutanoate: step 1/4. Feedback inhibition by Leu. In terms of biological role, catalyzes the condensation of the acetyl group of acetyl-CoA with 3-methyl-2-oxobutanoate (2-oxoisovalerate) to form 3-carboxy-3-hydroxy-4-methylpentanoate (2-isopropylmalate). Involved in Leu biosynthesis, but does not participate in the chain elongation of glucosinolates. This chain is 2-isopropylmalate synthase 2, chloroplastic, found in Arabidopsis thaliana (Mouse-ear cress).